A 204-amino-acid polypeptide reads, in one-letter code: N-(5'-phosphoribosyl)anthranilate isomerase (204 aa).

Belongs to the TrpF family.

It carries out the reaction N-(5-phospho-beta-D-ribosyl)anthranilate = 1-(2-carboxyphenylamino)-1-deoxy-D-ribulose 5-phosphate. It participates in amino-acid biosynthesis; L-tryptophan biosynthesis; L-tryptophan from chorismate: step 3/5. In Bacillus thuringiensis (strain Al Hakam), this protein is N-(5'-phosphoribosyl)anthranilate isomerase.